Here is a 501-residue protein sequence, read N- to C-terminus: ATP synthase subunit alpha (501 aa).

169-176 contributes to the ATP binding site; the sequence is GDRQTGKT.

This sequence belongs to the ATPase alpha/beta chains family. As to quaternary structure, F-type ATPases have 2 components, CF(1) - the catalytic core - and CF(0) - the membrane proton channel. CF(1) has five subunits: alpha(3), beta(3), gamma(1), delta(1), epsilon(1). CF(0) has three main subunits: a(1), b(2) and c(9-12). The alpha and beta chains form an alternating ring which encloses part of the gamma chain. CF(1) is attached to CF(0) by a central stalk formed by the gamma and epsilon chains, while a peripheral stalk is formed by the delta and b chains.

The protein resides in the cell membrane. It carries out the reaction ATP + H2O + 4 H(+)(in) = ADP + phosphate + 5 H(+)(out). Its function is as follows. Produces ATP from ADP in the presence of a proton gradient across the membrane. The alpha chain is a regulatory subunit. The sequence is that of ATP synthase subunit alpha from Streptococcus thermophilus (strain CNRZ 1066).